A 45-amino-acid polypeptide reads, in one-letter code: Gene 78 protein (45 aa).

Basic and acidic residues predominate over residues 1 to 14; it reads MKKMSDQLKARLEL. The segment at 1-45 is disordered; the sequence is MKKMSDQLKARLELRLSNAAQPHRNRKREMKRPGKGNRNNWKKEY. Residues 23–35 are compositionally biased toward basic residues; that stretch reads HRNRKREMKRPGK.

The chain is Gene 78 protein (78) from Mycobacterium phage L5 (Mycobacteriophage L5).